Reading from the N-terminus, the 507-residue chain is ATP synthase subunit alpha (507 aa).

Residue 168 to 175 (GDRQTGKT) coordinates ATP.

It belongs to the ATPase alpha/beta chains family. In terms of assembly, F-type ATPases have 2 components, CF(1) - the catalytic core - and CF(0) - the membrane proton channel. CF(1) has five subunits: alpha(3), beta(3), gamma(1), delta(1), epsilon(1). CF(0) has three main subunits: a(1), b(2) and c(9-12). The alpha and beta chains form an alternating ring which encloses part of the gamma chain. CF(1) is attached to CF(0) by a central stalk formed by the gamma and epsilon chains, while a peripheral stalk is formed by the delta and b chains.

The protein resides in the cell membrane. It catalyses the reaction ATP + H2O + 4 H(+)(in) = ADP + phosphate + 5 H(+)(out). In terms of biological role, produces ATP from ADP in the presence of a proton gradient across the membrane. The alpha chain is a regulatory subunit. This chain is ATP synthase subunit alpha, found in Mesomycoplasma hyopneumoniae (strain J / ATCC 25934 / NCTC 10110) (Mycoplasma hyopneumoniae).